The chain runs to 1059 residues: Ubiquitin carboxyl-terminal hydrolase 36 (1059 aa).

Disordered stretches follow at residues 22–45 (LGGN…NGSL) and 102–145 (GKLV…KPKR). A compositionally biased stretch (polar residues) spans 23 to 45 (GGNSSAGSSTDQAKSGEDTNGSL). The span at 121-138 (HPNNQSHHNHPHPTSNPN) shows a compositional bias: low complexity. In terms of domain architecture, USP spans 168-457 (TGMINVGNTC…NAYIMFFELD (290 aa)). Cys177 functions as the Nucleophile in the catalytic mechanism. The active-site Proton acceptor is His416. Disordered regions lie at residues 464-512 (PPAN…YTNG), 554-853 (ATSA…VTSN), 941-1005 (RQRD…FYNQ), and 1022-1059 (FGGA…QQQT). 2 stretches are compositionally biased toward low complexity: residues 479–494 (STTP…PSPT) and 561–580 (NGNK…KSIN). Residues Ser490 and Ser492 each carry the phosphoserine modification. Residues 603–615 (TTAQLPSMPNMTE) are compositionally biased toward polar residues. Thr632 and Thr636 each carry phosphothreonine. A phosphoserine mark is found at Ser646 and Ser648. Residues 673–702 (ESGQTNGHSKTNGSLTNGSASSSVHVNNSK) show a composition bias toward polar residues. The segment covering 703–720 (QKTDAIDEIFKSLKKSAD) has biased composition (basic and acidic residues). The residue at position 721 (Ser721) is a Phosphoserine. Residues 721–730 (SEEDDDEEEP) are compositionally biased toward acidic residues. Low complexity predominate over residues 740-750 (PQKQSQSQSKA). The span at 751–760 (PPSPKTPPSP) shows a compositional bias: pro residues. Phosphoserine is present on Ser753. A Phosphothreonine modification is found at Thr756. Ser759 carries the post-translational modification Phosphoserine. The segment covering 779-788 (DAIDDDDDAV) has biased composition (acidic residues). Thr799 is modified (phosphothreonine). Polar residues predominate over residues 806 to 818 (NPFSSSKPSTDSP). Ser817 bears the Phosphoserine mark. Thr820 bears the Phosphothreonine mark. Residues 833 to 853 (ALKSHQQPRVGNGYQSNVTSN) are compositionally biased toward polar residues. Residues 963–974 (SGSAKGNNASNS) are compositionally biased toward low complexity.

It belongs to the peptidase C19 family. As to quaternary structure, interacts with atms/PAF1, but not with CycT.

It localises to the nucleus. The protein resides in the nucleolus. It carries out the reaction Thiol-dependent hydrolysis of ester, thioester, amide, peptide and isopeptide bonds formed by the C-terminal Gly of ubiquitin (a 76-residue protein attached to proteins as an intracellular targeting signal).. Its function is as follows. Required for maintaining multiple types of adult stem cells, including male and female germline, epithelial follicle cell and intestinal stem cells. May function as a transcriptional repressor by continually deubiquiting histone H2B at the promoters of genes critical for cellular differentiation, thereby preventing histone H3 'Lys-4' trimethylation (H3K4). Controls selective autophagy activation by ubiquitinated proteins. The chain is Ubiquitin carboxyl-terminal hydrolase 36 (Usp36) from Drosophila sechellia (Fruit fly).